The following is a 323-amino-acid chain: Beta-ketoacyl-[acyl-carrier-protein] synthase III 1 (323 aa).

Active-site residues include Cys-114 and His-254. Residues Gln-255–Arg-259 are ACP-binding. Asn-284 is a catalytic residue.

It belongs to the thiolase-like superfamily. FabH family. As to quaternary structure, homodimer.

Its subcellular location is the cytoplasm. It carries out the reaction malonyl-[ACP] + acetyl-CoA + H(+) = 3-oxobutanoyl-[ACP] + CO2 + CoA. It functions in the pathway lipid metabolism; fatty acid biosynthesis. Its function is as follows. Catalyzes the condensation reaction of fatty acid synthesis by the addition to an acyl acceptor of two carbons from malonyl-ACP. Catalyzes the first condensation reaction which initiates fatty acid synthesis and may therefore play a role in governing the total rate of fatty acid production. Possesses both acetoacetyl-ACP synthase and acetyl transacylase activities. Its substrate specificity determines the biosynthesis of branched-chain and/or straight-chain of fatty acids. The protein is Beta-ketoacyl-[acyl-carrier-protein] synthase III 1 of Lactiplantibacillus plantarum (strain ATCC BAA-793 / NCIMB 8826 / WCFS1) (Lactobacillus plantarum).